The chain runs to 191 residues: GDP-mannose pyrophosphatase (191 aa).

Residues tyrosine 17, lysine 38 to glutamate 40, arginine 67, and alanine 85 to leucine 87 contribute to the GDP-alpha-D-mannose site. The Nudix hydrolase domain maps to aspartate 43–leucine 180. Alanine 85, glutamate 100, and glutamate 104 together coordinate Mg(2+). Residues glycine 86 to glycine 106 carry the Nudix box motif. GDP-alpha-D-mannose-binding positions include glutamate 104, glutamate 127, aspartate 150–glutamate 151, and lysine 176. A Mg(2+)-binding site is contributed by glutamate 151.

This sequence belongs to the Nudix hydrolase family. NudK subfamily. As to quaternary structure, homodimer. Mg(2+) is required as a cofactor.

It carries out the reaction GDP-alpha-D-mannose + H2O = alpha-D-mannose 1-phosphate + GMP + 2 H(+). Nucleoside diphosphate sugar hydrolase that hydrolyzes GDP-mannose as its preferred substrate, yielding GMP and mannose-1-phosphate. The sequence is that of GDP-mannose pyrophosphatase (nudK) from Escherichia coli (strain K12 / DH10B).